A 599-amino-acid polypeptide reads, in one-letter code: Subtilisin-like protease 1 (599 aa).

The first 20 residues, 1-20, serve as a signal peptide directing secretion; sequence MRTVFIYACIISLVLRTIPA. Residues 21-195 constitute a propeptide, inhibition peptide; it reads HNDLMSKEKE…VESDELVGAD (175 aa). Asn57 is a glycosylation site (N-linked (GlcNAc...) asparagine). Residues 74–101 are a coiled coil; the sequence is EDAPKEELNKIEMEKKKAEEEAKNSKKK. Positions 123, 126, 128, and 183 each coordinate Ca(2+). A glycan (N-linked (GlcNAc...) asparagine) is linked at Asn227. Asp251 is a Ca(2+) binding site. The 318-residue stretch at 257–574 folds into the Peptidase S8 domain; that stretch reads QWGLDLARLD…GGYIDILNAV (318 aa). Disulfide bonds link Cys283/Cys393 and Cys372/Cys389. Asp286 serves as the catalytic Charge relay system. 9 residues coordinate Ca(2+): Asp295, Glu306, Asp314, Asp315, Asp316, Asn318, Ile320, Asp322, and Asp323. Asn331 carries an N-linked (GlcNAc...) asparagine glycan. His342 (charge relay system) is an active-site residue. Position 353 (Ile353) interacts with Ca(2+). N-linked (GlcNAc...) asparagine glycosylation occurs at Asn355. 3 residues coordinate Ca(2+): Asn356, Ile358, and Val360. N-linked (GlcNAc...) asparagine glycans are attached at residues Asn402 and Asn434. A disulfide bridge connects residues Cys435 and Cys448. The Charge relay system role is filled by Ser519.

This sequence belongs to the peptidase S8 family. The N-terminal prodomain is cleaved.

It localises to the secreted. Its subcellular location is the parasitophorous vacuole lumen. The protein resides in the cytoplasmic vesicle. The protein localises to the secretory vesicle. It catalyses the reaction Hydrolysis of proteins with broad specificity for peptide bonds, and a preference for a large uncharged residue in P1. Hydrolyzes peptide amides.. Its function is as follows. Mediates the proteolytic maturation of serine protease SERA3. Mediates the proteolytic maturation of MSP1, and thereby may prime the parasite cell surface for invasion of fresh erythrocytes. Required for completion of the parasite pre-erythrocytic stages. Required for hepatic schizont development and merozoite formation. Required for the egress of the hepatic merozoites from the parasitophorous vacuole. Required for parasite infectivity during blood stages. Required for male gamete egress. In Plasmodium berghei (strain Anka), this protein is Subtilisin-like protease 1.